The following is a 420-amino-acid chain: Probable secreted beta-glucosidase SUN4 (420 aa).

The first 24 residues, 1–24 (MKLSATTLTAASLIGYSTIVSALP), serve as a signal peptide directing secretion. Residues 89–145 (TKSSSKVASSSESTEQIATTSSSAQTTLTSSETSTSESSVPISTSGSASTSSAASSA) are disordered. Asn395 carries N-linked (GlcNAc...) asparagine glycosylation.

It belongs to the SUN family. In terms of processing, glycosylated.

The protein resides in the secreted. It is found in the cell wall. Functionally, involved in the remodeling of the cell wall during the various phases of yeast culture development and under various environmental conditions and plays a role in septation. The protein is Probable secreted beta-glucosidase SUN4 (SUN4) of Saccharomyces cerevisiae (strain ATCC 204508 / S288c) (Baker's yeast).